The chain runs to 634 residues: Mediator of RNA polymerase II transcription subunit 17 (634 aa).

Disordered stretches follow at residues 51–73 (DKHKDPWAEDEESDGQSAADVDT) and 606–626 (DEKASRAQSWKPDSTTPGSPG). Positions 611-623 (RAQSWKPDSTTPG) are enriched in polar residues.

This sequence belongs to the Mediator complex subunit 17 family. As to quaternary structure, component of the Mediator complex.

Its subcellular location is the nucleus. Functionally, component of the Mediator complex, a coactivator involved in the regulated transcription of nearly all RNA polymerase II-dependent genes. Mediator functions as a bridge to convey information from gene-specific regulatory proteins to the basal RNA polymerase II transcription machinery. Mediator is recruited to promoters by direct interactions with regulatory proteins and serves as a scaffold for the assembly of a functional preinitiation complex with RNA polymerase II and the general transcription factors. The polypeptide is Mediator of RNA polymerase II transcription subunit 17 (srb4) (Aspergillus terreus (strain NIH 2624 / FGSC A1156)).